We begin with the raw amino-acid sequence, 327 residues long: GMP reductase (327 aa).

The active-site Thioimidate intermediate is the Cys-176. NADP(+) is bound at residue Ile-205–Val-228.

This sequence belongs to the IMPDH/GMPR family. GuaC type 2 subfamily.

The catalysed reaction is IMP + NH4(+) + NADP(+) = GMP + NADPH + 2 H(+). Its function is as follows. Catalyzes the irreversible NADPH-dependent deamination of GMP to IMP. It functions in the conversion of nucleobase, nucleoside and nucleotide derivatives of G to A nucleotides, and in maintaining the intracellular balance of A and G nucleotides. The protein is GMP reductase of Helicobacter pylori (strain ATCC 700392 / 26695) (Campylobacter pylori).